A 257-amino-acid polypeptide reads, in one-letter code: Early E1A protein (257 aa).

2 disordered regions span residues 26–46 (NATM…PSLH) and 75–103 (LAAE…EKEI). Positions 43–51 (PSLHDLYDL) are interaction with RB1 in competition with E2F1. Positions 75–91 (LAAEEASSPSSDSDSSL) are enriched in low complexity. Residues 79–144 (EASSPSSDSD…ASHGVQAVSE (66 aa)) form an interaction with UBE2I region. Over residues 94–103 (PRHDRGEKEI) the composition is skewed to basic and acidic residues. The PXLXP motif, interaction with host ZMYND11 signature appears at 104 to 108 (PGLKW). An LXCXE motif, interaction with host RB1 and TMEM173/STING motif is present at residues 113-117 (LRCYE). The segment at 158 to 178 (CKSCEFHRINTGDKAVLCALC) is a zinc-finger region. Residues 191–221 (VSDADDETPTTESTLSPPEIGTSPSDNIVRP) are disordered. A compositionally biased stretch (low complexity) spans 200 to 209 (TTESTLSPPE). The PXDLS motif, CTBP-binding motif lies at 246-250 (PLDLC). Positions 252 to 257 (RKRPRH) match the Nuclear localization signal motif.

This sequence belongs to the adenoviridae E1A protein family. Interacts with host UBE2I; this interaction interferes with polySUMOylation. Interacts with host RB1; this interaction induces the aberrant dissociation of RB1-E2F1 complex thereby disrupting the activity of RB1 and activating E2F1-regulated genes. Interacts with host ATF7; the interaction enhances ATF7-mediated viral transactivation activity which requires the zinc binding domains of both proteins. Isoform early E1A 32 kDa protein and isoform early E1A 26 kDa protein interact (via N-terminus) with CUL1 and E3 ubiquitin ligase RBX1; these interactions inhibit RBX1-CUL1-dependent elongation reaction of ubiquitin chains and attenuate ubiquitination of SCF(FBXW7) target proteins. Interacts (via PXLXP motif) with host ZMYND11/BS69 (via MYND-type zinc finger); this interaction inhibits E1A mediated transactivation. Interacts with host EP300; this interaction stimulates the acetylation of RB1 by recruiting EP300 and RB1 into a multimeric-protein complex. Interacts with host CTBP1 and CTBP2; this interaction seems to potentiate viral replication. Interacts with host DCAF7. Interacts with host DYRK1A. Interacts with host KPNA4; this interaction allows E1A import into the host nucleus. Interacts with host EP400; this interaction stabilizes MYC. Interacts with host TBP protein; this interaction probably disrupts the TBP-TATA complex. Interacts (via LXCXE motif) with host TMEM173/STING; this interaction impairs the ability of TMEM173/STING to sense cytosolic DNA and promote the production of type I interferon (IFN-alpha and IFN-beta). Interacts (via C-terminus) with host ZBED1/hDREF (via C-terminus); the interaction is direct.

The protein resides in the host nucleus. Functionally, plays a role in viral genome replication by driving entry of quiescent cells into the cell cycle. Stimulation of progression from G1 to S phase allows the virus to efficiently use the cellular DNA replicating machinery to achieve viral genome replication. E1A protein has both transforming and trans-activating activities. Induces the disassembly of the E2F1 transcription factor from RB1 by direct competition for the same binding site on RB1, with subsequent transcriptional activation of E2F1-regulated S-phase genes and of the E2 region of the adenoviral genome. Release of E2F1 leads to the ARF-mediated inhibition of MDM2 and causes TP53/p53 to accumulate because it is not targeted for degradation by MDM2-mediated ubiquitination anymore. This increase in TP53, in turn, would arrest the cell proliferation and direct its death but this effect is counteracted by the viral protein E1B-55K. Inactivation of the ability of RB1 to arrest the cell cycle is critical for cellular transformation, uncontrolled cellular growth and proliferation induced by viral infection. Interaction with RBX1 and CUL1 inhibits ubiquitination of the proteins targeted by SCF(FBXW7) ubiquitin ligase complex, and may be linked to unregulated host cell proliferation. The tumorigenesis-restraining activity of E1A may be related to the disruption of the host CtBP-CtIP complex through the CtBP binding motif. Interaction with host TMEM173/STING impairs the ability of TMEM173/STING to sense cytosolic DNA and promote the production of type I interferon (IFN-alpha and IFN-beta). Promotes the sumoylation of host ZBED1/hDREF with SUMO1. The chain is Early E1A protein from Human adenovirus E serotype 4 (HAdV-4).